Here is a 464-residue protein sequence, read N- to C-terminus: Protein FAM90A3 (464 aa).

Disordered stretches follow at residues 1 to 42 (MMAR…DPRL), 70 to 389 (PATL…HDGA), and 411 to 437 (APSF…SEAP). Basic and acidic residues-rich tracts occupy residues 74-89 (GKKE…KPRV) and 97-114 (NKDK…DPQR). Low complexity predominate over residues 180–197 (LASLSPLRKASLSSSSSL).

Belongs to the FAM90 family.

In Homo sapiens (Human), this protein is Protein FAM90A3.